The chain runs to 342 residues: Small GTPase LIP1 (342 aa).

The tract at residues 12-285 (KEQILAPLCG…FHGDPYKYNN (274 aa)) is small GTPase-like. GTP-binding positions include 29–36 (GDSGVGKT), 90–94 (DVSGH), and 160–163 (NKAD). Disordered stretches follow at residues 274-313 (TSFH…TPDN) and 323-342 (SVQE…DINV). Polar residues predominate over residues 323–333 (SVQETTNNGSA).

This sequence belongs to the small GTPase superfamily.

It is found in the nucleus. The protein localises to the cytoplasm. Functionally, functional small GTPase that acts as a negative factor controlling the light-dependent period shortening of circadian rhythms and light-induced phase resetting during the subjective night. May protect the clock from excessive or mistimed light. Suppresses red and blue light-mediated photomorphogenesis and is required for light-controlled inhibition of endoreplication and tolerance to salt stress. The entrainment of the circadian clock is independent from the other pleiotropic effects. Could be a regulator of seedling establishment. This is Small GTPase LIP1 from Arabidopsis thaliana (Mouse-ear cress).